A 49-amino-acid polypeptide reads, in one-letter code: uncharacterized protein (49 aa).

This is an uncharacterized protein from Sulfolobus islandicus filamentous virus (isolate Iceland/Hveragerdi) (SIFV).